A 189-amino-acid chain; its full sequence is Pyridoxal 5'-phosphate synthase subunit PdxT (189 aa).

47-49 contributes to the L-glutamine binding site; sequence GES. Catalysis depends on Cys79, which acts as the Nucleophile. L-glutamine is bound by residues Arg106 and 135-136; that span reads IR. Catalysis depends on charge relay system residues His171 and Glu173.

It belongs to the glutaminase PdxT/SNO family. In terms of assembly, in the presence of PdxS, forms a dodecamer of heterodimers. Only shows activity in the heterodimer.

The catalysed reaction is aldehydo-D-ribose 5-phosphate + D-glyceraldehyde 3-phosphate + L-glutamine = pyridoxal 5'-phosphate + L-glutamate + phosphate + 3 H2O + H(+). The enzyme catalyses L-glutamine + H2O = L-glutamate + NH4(+). It functions in the pathway cofactor biosynthesis; pyridoxal 5'-phosphate biosynthesis. In terms of biological role, catalyzes the hydrolysis of glutamine to glutamate and ammonia as part of the biosynthesis of pyridoxal 5'-phosphate. The resulting ammonia molecule is channeled to the active site of PdxS. This is Pyridoxal 5'-phosphate synthase subunit PdxT from Desulforudis audaxviator (strain MP104C).